Reading from the N-terminus, the 325-residue chain is Elongation factor P--(R)-beta-lysine ligase (325 aa).

76-78 serves as a coordination point for substrate; the sequence is SPE. Residues 100–102 and Asn-109 each bind ATP; that span reads RNE. Position 118 (Tyr-118) interacts with substrate. An ATP-binding site is contributed by 244 to 245; that stretch reads EL. Glu-251 contacts substrate. Gly-300 lines the ATP pocket.

The protein belongs to the class-II aminoacyl-tRNA synthetase family. EpmA subfamily. Homodimer.

It catalyses the reaction D-beta-lysine + L-lysyl-[protein] + ATP = N(6)-((3R)-3,6-diaminohexanoyl)-L-lysyl-[protein] + AMP + diphosphate + H(+). Its function is as follows. With EpmB is involved in the beta-lysylation step of the post-translational modification of translation elongation factor P (EF-P) on 'Lys-34'. Catalyzes the ATP-dependent activation of (R)-beta-lysine produced by EpmB, forming a lysyl-adenylate, from which the beta-lysyl moiety is then transferred to the epsilon-amino group of EF-P 'Lys-34'. The polypeptide is Elongation factor P--(R)-beta-lysine ligase (Escherichia coli O139:H28 (strain E24377A / ETEC)).